The chain runs to 449 residues: Ribulose bisphosphate carboxylase large chain (449 aa).

The residue at position 7 (lysine 7) is an N6,N6,N6-trimethyllysine. Substrate contacts are provided by asparagine 116 and threonine 166. The active-site Proton acceptor is lysine 168. Lysine 170 serves as a coordination point for substrate. The Mg(2+) site is built by lysine 194, aspartate 196, and glutamate 197. At lysine 194 the chain carries N6-carboxylysine. Histidine 287 serves as the catalytic Proton acceptor. Substrate contacts are provided by arginine 288, histidine 320, and serine 372.

It belongs to the RuBisCO large chain family. Type I subfamily. In terms of assembly, heterohexadecamer of 8 large chains and 8 small chains; disulfide-linked. The disulfide link is formed within the large subunit homodimers. It depends on Mg(2+) as a cofactor. Post-translationally, the disulfide bond which can form in the large chain dimeric partners within the hexadecamer appears to be associated with oxidative stress and protein turnover.

The protein resides in the plastid. It is found in the chloroplast. It carries out the reaction 2 (2R)-3-phosphoglycerate + 2 H(+) = D-ribulose 1,5-bisphosphate + CO2 + H2O. The catalysed reaction is D-ribulose 1,5-bisphosphate + O2 = 2-phosphoglycolate + (2R)-3-phosphoglycerate + 2 H(+). Its function is as follows. RuBisCO catalyzes two reactions: the carboxylation of D-ribulose 1,5-bisphosphate, the primary event in carbon dioxide fixation, as well as the oxidative fragmentation of the pentose substrate in the photorespiration process. Both reactions occur simultaneously and in competition at the same active site. This is Ribulose bisphosphate carboxylase large chain from Aspidistra elatior (Cast-iron plant).